Reading from the N-terminus, the 471-residue chain is Probable lysophospholipase BODYGUARD 2 (471 aa).

The N-terminal stretch at 1 to 45 is a signal peptide; it reads MGIARWLNRTVGFFVFALLDIADFLLCYTYKTLDYFLESERKPCY. The N-palmitoyl cysteine moiety is linked to residue Cys-46. Residues 193-296 enclose the AB hydrolase-1 domain; that stretch reads VVFIHGFVSS…AIKSLTLLAP (104 aa). His-197 is a catalytic residue. The active-site Nucleophile is Ser-271. Catalysis depends on charge relay system residues Asp-418 and His-446.

It is found in the cell membrane. Its subcellular location is the secreted. The protein resides in the cell wall. Its function is as follows. Involved in cuticle development and morphogenesis. The protein is Probable lysophospholipase BODYGUARD 2 of Arabidopsis thaliana (Mouse-ear cress).